The following is a 600-amino-acid chain: Adenine deaminase 4 (600 aa).

Belongs to the metallo-dependent hydrolases superfamily. Adenine deaminase family. The cofactor is Mn(2+).

The catalysed reaction is adenine + H2O + H(+) = hypoxanthine + NH4(+). The polypeptide is Adenine deaminase 4 (Rhizobium meliloti (strain 1021) (Ensifer meliloti)).